A 398-amino-acid polypeptide reads, in one-letter code: Na(+)/H(+) antiporter NhaA (398 aa).

The next 12 helical transmembrane spans lie at 9–29 (MITHPAAGGVLLFAAALAAIV), 57–77 (LSLLVLVNDGLMAVFFLAVGL), 95–115 (AFPAIAALGGMVAPAVIYSLM), 124–144 (AGWAIPAATDIAFAVGVLALL), 154–174 (VFMLALAIIDDLGAIVIIALF), 177–197 (TALEPLALAAAGAVIGIMALM), 204–224 (FLSLYLLLGAVLWGCILLSGI), 226–246 (ATLAGVVVGGLIPLTLPSTEV), 255–275 (WLQPWVVYLILPLFAFANAGI), 288–308 (FLPLGIAAGLVVGKPLGIVLF), 329–349 (IAAAAMLCGIGFTMSIFIANL), and 359–379 (IVLAKVGILSGSVIAALLGYL).

It belongs to the NhaA Na(+)/H(+) (TC 2.A.33) antiporter family.

Its subcellular location is the cell inner membrane. It catalyses the reaction Na(+)(in) + 2 H(+)(out) = Na(+)(out) + 2 H(+)(in). In terms of biological role, na(+)/H(+) antiporter that extrudes sodium in exchange for external protons. The sequence is that of Na(+)/H(+) antiporter NhaA from Sodalis glossinidius (strain morsitans).